The primary structure comprises 314 residues: Splicing factor YJU2 (314 aa).

4 residues coordinate Zn(2+): Cys-43, Cys-46, Cys-80, and Cys-83. Disordered stretches follow at residues 178–238 and 253–314; these read MSQE…NEVP and LAGL…DSDS. Residues 200–209 show a composition bias toward basic and acidic residues; sequence EEARHRRLLE. A phosphoserine mark is found at Ser-211, Ser-213, and Ser-220. Over residues 222–232 the composition is skewed to low complexity; it reads PRAAARPNPTA. Residues 290–302 show a composition bias toward polar residues; sequence PTPQTPGTSSLSQ. Ser-309, Ser-312, and Ser-314 each carry phosphoserine.

Belongs to the CWC16 family. YJU2 subfamily. In terms of assembly, component of the spliceosome. Present in the activated B complex, the catalytically activated B* complex which catalyzes the branching, the catalytic step 1 C complex catalyzing the exon ligation, and the postcatalytic P complex containing the ligated exons (mRNA) and the excised lariat intron.

Its subcellular location is the nucleus. Part of the spliceosome which catalyzes two sequential transesterification reactions, first the excision of the non-coding intron from pre-mRNA and then the ligation of the coding exons to form the mature mRNA. Plays a role in stabilizing the structure of the spliceosome catalytic core and docking of the branch helix into the active site, producing 5'-exon and lariat intron-3'-intermediates. May protect cells from TP53-dependent apoptosis upon dsDNA break damage through association with PRP19-CD5L complex. This Mus musculus (Mouse) protein is Splicing factor YJU2.